We begin with the raw amino-acid sequence, 320 residues long: 3'-5' exoribonuclease YhaM (320 aa).

A DNA-binding region (OB) is located at residues 18–90; sequence FLIKSATKAV…QLKIGSIRPT (73 aa). An HD domain is found at 163–279; it reads HVVCMLNVAK…LHMIDNIDAK (117 aa).

Belongs to the YhaM family.

In terms of biological role, shows a 3'-5' exoribonuclease activity. This is 3'-5' exoribonuclease YhaM from Halalkalibacterium halodurans (strain ATCC BAA-125 / DSM 18197 / FERM 7344 / JCM 9153 / C-125) (Bacillus halodurans).